A 122-amino-acid polypeptide reads, in one-letter code: Iron-sulfur cluster insertion protein ErpA (122 aa).

Residues Cys50, Cys114, and Cys116 each coordinate iron-sulfur cluster.

It belongs to the HesB/IscA family. As to quaternary structure, homodimer. The cofactor is iron-sulfur cluster.

Required for insertion of 4Fe-4S clusters for at least IspG. This is Iron-sulfur cluster insertion protein ErpA from Alkalilimnicola ehrlichii (strain ATCC BAA-1101 / DSM 17681 / MLHE-1).